The sequence spans 273 residues: Hemin import ATP-binding protein HmuV (273 aa).

One can recognise an ABC transporter domain in the interval 2-256 (LTAHHLDVAR…AHIAQCYGFA (255 aa)). 34–41 (GRNGAGKS) serves as a coordination point for ATP.

It belongs to the ABC transporter superfamily. Heme (hemin) importer (TC 3.A.1.14.5) family. As to quaternary structure, the complex is composed of two ATP-binding proteins (HmuV), two transmembrane proteins (HmuU) and a solute-binding protein (HmuT).

Its subcellular location is the cell inner membrane. Functionally, part of the ABC transporter complex HmuTUV involved in hemin import. Responsible for energy coupling to the transport system. This Burkholderia lata (strain ATCC 17760 / DSM 23089 / LMG 22485 / NCIMB 9086 / R18194 / 383) protein is Hemin import ATP-binding protein HmuV.